The primary structure comprises 676 residues: ATP-dependent zinc metalloprotease FtsH (676 aa).

The Cytoplasmic segment spans residues 1–12; that stretch reads MSFFDKIFKKFH. The helical transmembrane segment at 13 to 33 threads the bilayer; that stretch reads MGVLYFAVILIGATFIYCYFT. The Extracellular segment spans residues 34-115; it reads KHEKKDNNTF…DPRPWNGYEH (82 aa). The helical transmembrane segment at 116–136 threads the bilayer; the sequence is VFWVFRQCLTMLFFYCFFLFF. At 137 to 676 the chain is on the cytoplasmic side; that stretch reads ADTIKQMGQE…EVLSTDSEQT (540 aa). 212-219 contacts ATP; sequence GPPGTGKT. H433 provides a ligand contact to Zn(2+). E434 is a catalytic residue. The Zn(2+) site is built by H437 and D509. Positions 610-676 are disordered; it reads EKEETNAPTQ…EVLSTDSEQT (67 aa). Polar residues predominate over residues 615 to 636; sequence NAPTQTTSQMSSNNETTNTDKT. The segment covering 650–667 has biased composition (low complexity); the sequence is NQESNESNPNNNEKASPE.

This sequence in the central section; belongs to the AAA ATPase family. In the C-terminal section; belongs to the peptidase M41 family. In terms of assembly, homohexamer. Zn(2+) is required as a cofactor.

It is found in the cell membrane. Acts as a processive, ATP-dependent zinc metallopeptidase for both cytoplasmic and membrane proteins. Plays a role in the quality control of integral membrane proteins. The sequence is that of ATP-dependent zinc metalloprotease FtsH from Aster yellows witches'-broom phytoplasma (strain AYWB).